The chain runs to 654 residues: Protein fem-1 homolog A-like (654 aa).

ANK repeat units lie at residues 2 to 31, 40 to 70, 82 to 111, 115 to 145, 149 to 178, 182 to 211, and 214 to 243; these read DLHTAVYNAAHDGKLPLLQKLLASRGREEL, GGGTPLLIAARRGHLDVVEYLVDHCGASVEA, EGAPPLWAASAAGHLAVVRSLLHRGASVNR, TNSTPLRAACFNGHLDVVRCLVGEHKADLEV, HGHTCLMISCYKGHREIARYLLERGAQVNR, KGNTALHDCAESGSLEILQLLLSCHARMER, and YGMTPLLAASITGHTNIVEYLIQEQPSHEQ. Residue S108 is modified to Phosphoserine. The disordered stretch occupies residues 241–265; sequence HEQLSGTELPGEGSSQMAGNHCSTP. Residues 253–263 are compositionally biased toward polar residues; it reads GSSQMAGNHCS. 2 TPR repeats span residues 283-317 and 375-408; these read VEALELLGATYVDKKRDLLGALKHWRRAMELRHQG and SYYIRYRGAVYADSGNFERCIRLWKYALDMQQNN. ANK repeat units lie at residues 519–561 and 565–594; these read NGFT…DPDS and DNNSPLHIAAQNNCPAIMDALIEAGAHMDA. At S608 the chain carries Phosphoserine.

It belongs to the fem-1 family. In terms of assembly, component of a CRL2 E3 ubiquitin-protein ligase complex, also named ECS (Elongin BC-CUL2/5-SOCS-box protein) complex, composed of CUL2, Elongin BC (ELOB and ELOC), RBX1 and substrate-specific adapter FEM1A.

The protein resides in the mitochondrion. Its subcellular location is the cytoplasm. It functions in the pathway protein modification; protein ubiquitination. In terms of biological role, substrate-recognition component of a Cul2-RING (CRL2) E3 ubiquitin-protein ligase complex of the DesCEND (destruction via C-end degrons) pathway, which recognizes a C-degron located at the extreme C terminus of target proteins, leading to their ubiquitination and degradation. The C-degron recognized by the DesCEND pathway is usually a motif of less than ten residues and can be present in full-length proteins, truncated proteins or proteolytically cleaved forms. The CRL2(FEM1A) complex specifically recognizes proteins with an arginine at the C-terminus: recognizes and binds proteins ending with -Lys/Arg-Xaa-Arg and -Lys/Arg-Xaa-Xaa-Arg C-degrons, such as SIL1 or OR51B2, leading to their ubiquitination and degradation. The protein is Protein fem-1 homolog A-like of Mus musculus (Mouse).